Here is a 272-residue protein sequence, read N- to C-terminus: Putative phosphoenolpyruvate synthase regulatory protein (272 aa).

152–159 (GVSRCGKT) serves as a coordination point for ADP.

This sequence belongs to the pyruvate, phosphate/water dikinase regulatory protein family. PSRP subfamily.

The enzyme catalyses [pyruvate, water dikinase] + ADP = [pyruvate, water dikinase]-phosphate + AMP + H(+). It catalyses the reaction [pyruvate, water dikinase]-phosphate + phosphate + H(+) = [pyruvate, water dikinase] + diphosphate. Its function is as follows. Bifunctional serine/threonine kinase and phosphorylase involved in the regulation of the phosphoenolpyruvate synthase (PEPS) by catalyzing its phosphorylation/dephosphorylation. This chain is Putative phosphoenolpyruvate synthase regulatory protein, found in Pseudomonas savastanoi pv. phaseolicola (strain 1448A / Race 6) (Pseudomonas syringae pv. phaseolicola (strain 1448A / Race 6)).